The following is a 484-amino-acid chain: UDP-N-acetylmuramate--L-alanine ligase (484 aa).

Residue 123–129 coordinates ATP; the sequence is GTHGKTT.

This sequence belongs to the MurCDEF family.

It localises to the cytoplasm. It carries out the reaction UDP-N-acetyl-alpha-D-muramate + L-alanine + ATP = UDP-N-acetyl-alpha-D-muramoyl-L-alanine + ADP + phosphate + H(+). It participates in cell wall biogenesis; peptidoglycan biosynthesis. Its function is as follows. Cell wall formation. The protein is UDP-N-acetylmuramate--L-alanine ligase of Pseudomonas fluorescens (strain ATCC BAA-477 / NRRL B-23932 / Pf-5).